A 430-amino-acid polypeptide reads, in one-letter code: Enolase (430 aa).

Residue Gln-162 coordinates (2R)-2-phosphoglycerate. The active-site Proton donor is the Glu-204. Positions 242, 289, and 316 each coordinate Mg(2+). (2R)-2-phosphoglycerate contacts are provided by Lys-341, Arg-370, Ser-371, and Lys-392. Lys-341 acts as the Proton acceptor in catalysis.

The protein belongs to the enolase family. Requires Mg(2+) as cofactor.

The protein resides in the cytoplasm. Its subcellular location is the secreted. It localises to the cell surface. It carries out the reaction (2R)-2-phosphoglycerate = phosphoenolpyruvate + H2O. It participates in carbohydrate degradation; glycolysis; pyruvate from D-glyceraldehyde 3-phosphate: step 4/5. In terms of biological role, catalyzes the reversible conversion of 2-phosphoglycerate (2-PG) into phosphoenolpyruvate (PEP). It is essential for the degradation of carbohydrates via glycolysis. The polypeptide is Enolase (Flavobacterium johnsoniae (strain ATCC 17061 / DSM 2064 / JCM 8514 / BCRC 14874 / CCUG 350202 / NBRC 14942 / NCIMB 11054 / UW101) (Cytophaga johnsonae)).